Consider the following 188-residue polypeptide: dCTP deaminase (188 aa).

DCTP is bound at residue 109-114 (KSTYAR). Residue E135 is the Proton donor/acceptor of the active site. Q154, Y168, and Q178 together coordinate dCTP.

This sequence belongs to the dCTP deaminase family. In terms of assembly, homotrimer.

The catalysed reaction is dCTP + H2O + H(+) = dUTP + NH4(+). It functions in the pathway pyrimidine metabolism; dUMP biosynthesis; dUMP from dCTP (dUTP route): step 1/2. Catalyzes the deamination of dCTP to dUTP. The protein is dCTP deaminase of Helicobacter acinonychis (strain Sheeba).